Here is a 295-residue protein sequence, read N- to C-terminus: Farnesyl diphosphate synthase (295 aa).

Positions 46, 49, and 78 each coordinate isopentenyl diphosphate. Mg(2+) contacts are provided by D85 and D91. R96 lines the (2E)-geranyl diphosphate pocket. Residue R97 participates in isopentenyl diphosphate binding. (2E)-geranyl diphosphate is bound by residues K180, T181, Q220, and K237.

This sequence belongs to the FPP/GGPP synthase family. Mg(2+) is required as a cofactor.

It localises to the cytoplasm. It carries out the reaction isopentenyl diphosphate + (2E)-geranyl diphosphate = (2E,6E)-farnesyl diphosphate + diphosphate. The protein is Farnesyl diphosphate synthase (ispA) of Haemophilus influenzae (strain ATCC 51907 / DSM 11121 / KW20 / Rd).